The following is a 280-amino-acid chain: Bifunctional protein FolD (280 aa).

NADP(+) is bound by residues 161–163 (GRS), Ser-186, and Ile-227.

It belongs to the tetrahydrofolate dehydrogenase/cyclohydrolase family. Homodimer.

The catalysed reaction is (6R)-5,10-methylene-5,6,7,8-tetrahydrofolate + NADP(+) = (6R)-5,10-methenyltetrahydrofolate + NADPH. The enzyme catalyses (6R)-5,10-methenyltetrahydrofolate + H2O = (6R)-10-formyltetrahydrofolate + H(+). It functions in the pathway one-carbon metabolism; tetrahydrofolate interconversion. Catalyzes the oxidation of 5,10-methylenetetrahydrofolate to 5,10-methenyltetrahydrofolate and then the hydrolysis of 5,10-methenyltetrahydrofolate to 10-formyltetrahydrofolate. The protein is Bifunctional protein FolD of Caldanaerobacter subterraneus subsp. tengcongensis (strain DSM 15242 / JCM 11007 / NBRC 100824 / MB4) (Thermoanaerobacter tengcongensis).